Reading from the N-terminus, the 100-residue chain is Small ribosomal subunit protein uS14 (100 aa).

It belongs to the universal ribosomal protein uS14 family. In terms of assembly, part of the 30S ribosomal subunit. Contacts proteins S3 and S10.

Binds 16S rRNA, required for the assembly of 30S particles and may also be responsible for determining the conformation of the 16S rRNA at the A site. The chain is Small ribosomal subunit protein uS14 from Prochlorococcus marinus (strain MIT 9215).